A 137-amino-acid polypeptide reads, in one-letter code: Small heat shock protein IbpA (137 aa).

The region spanning 28 to 137 (SQSNGGYPPY…ANKPRRIEIN (110 aa)) is the sHSP domain.

Belongs to the small heat shock protein (HSP20) family. As to quaternary structure, monomer. Forms homomultimers of about 100-150 subunits at optimal growth temperatures. Conformation changes to monomers at high temperatures or high ionic concentrations.

The protein resides in the cytoplasm. Its function is as follows. Associates with aggregated proteins, together with IbpB, to stabilize and protect them from irreversible denaturation and extensive proteolysis during heat shock and oxidative stress. Aggregated proteins bound to the IbpAB complex are more efficiently refolded and reactivated by the ATP-dependent chaperone systems ClpB and DnaK/DnaJ/GrpE. Its activity is ATP-independent. The polypeptide is Small heat shock protein IbpA (Citrobacter koseri (strain ATCC BAA-895 / CDC 4225-83 / SGSC4696)).